The following is a 970-amino-acid chain: Rho GTPase-activating protein gacK (970 aa).

Positions 1 to 20 are cleaved as a signal peptide; that stretch reads MTLVYEKSSFVLIMAQIAEA. Disordered stretches follow at residues 30 to 49, 258 to 285, 312 to 446, 487 to 550, and 860 to 886; these read SNDL…SAAI, STCS…INQN, EITI…FSPT, STSN…NNNN, and TASS…NDDP. Composition is skewed to low complexity over residues 35-49 and 258-269; these read STSA…SAAI and STCSLSSNASNN. Pro residues predominate over residues 321–333; sequence IPLPPQSSSPPPT. Positions 334-383 are enriched in low complexity; sequence RNNQSSPSPSSPQQQNIMPTPPSTSLTPPQSPTLSPSSSTHSTPTQTTTT. Residues 392–406 show a composition bias toward polar residues; it reads PSTISQNNARKTQIP. Residues 407–426 show a composition bias toward low complexity; it reads TTTTTTTTTTTTTSTTSTTS. Positions 427–446 are enriched in polar residues; sequence PNPVVNNKNLNTPSSSFSPT. The Rho-GAP domain maps to 754–970; sequence IEDSELVEDN…LELIQFNKSL (217 aa). Over residues 860–885 the composition is skewed to low complexity; it reads TASSAATANSSSSGSGNGNSSPNNDD.

It localises to the cytoplasm. Functionally, rho GTPase-activating protein involved in the signal transduction pathway. The protein is Rho GTPase-activating protein gacK (gacK) of Dictyostelium discoideum (Social amoeba).